The following is a 117-amino-acid chain: Immunoglobulin kappa variable 1-39 (117 aa).

The N-terminal stretch at 1-22 (MDMRVPAQLLGLLLLWLRGARC) is a signal peptide. Positions 23–45 (DIQMTQSPSSLSASVGDRVTITC) are framework-1. The Ig-like domain occupies 24-117 (IQMTQSPSSL…YYCQQSYSTP (94 aa)). Cys-45 and Cys-110 are oxidised to a cystine. Positions 46–56 (RASQSISSYLN) are complementarity-determining-1. The tract at residues 57-71 (WYQQKPGKAPKLLIY) is framework-2. The segment at 72–78 (AASSLQS) is complementarity-determining-2. The framework-3 stretch occupies residues 79–110 (GVPSRFSGSGSGTDFTLTISSLQPEDFATYYC). The complementarity-determining-3 stretch occupies residues 111 to 117 (QQSYSTP).

In terms of assembly, immunoglobulins are composed of two identical heavy chains and two identical light chains; disulfide-linked.

The protein localises to the secreted. It is found in the cell membrane. In terms of biological role, v region of the variable domain of immunoglobulin light chains that participates in the antigen recognition. Immunoglobulins, also known as antibodies, are membrane-bound or secreted glycoproteins produced by B lymphocytes. In the recognition phase of humoral immunity, the membrane-bound immunoglobulins serve as receptors which, upon binding of a specific antigen, trigger the clonal expansion and differentiation of B lymphocytes into immunoglobulins-secreting plasma cells. Secreted immunoglobulins mediate the effector phase of humoral immunity, which results in the elimination of bound antigens. The antigen binding site is formed by the variable domain of one heavy chain, together with that of its associated light chain. Thus, each immunoglobulin has two antigen binding sites with remarkable affinity for a particular antigen. The variable domains are assembled by a process called V-(D)-J rearrangement and can then be subjected to somatic hypermutations which, after exposure to antigen and selection, allow affinity maturation for a particular antigen. The sequence is that of Immunoglobulin kappa variable 1-39 from Homo sapiens (Human).